Here is a 238-residue protein sequence, read N- to C-terminus: MSDSTKASLSSANMGNIHIDPTGFVKLGAQLPTLANILAQAIDELGLTLSAQQQRSLLLYLDQLLLWNKAYNLTAITDPVEALIKHVIDCLAIITHLPSGSLLDIGTGAGLPAVIIAICQPERSCTALDSNQKKIRFIKQVSSELGLSNMQPIASRIEAHEASYDVITSRAFASLIDFVAVAEPRLADNGYLCAMKGKAPSEEELDALSNDWQFKTIKLNVPRLHDSRHLIELSYKNV.

S-adenosyl-L-methionine-binding positions include Gly-106, Leu-111, 157-158 (IE), and Arg-170.

Belongs to the methyltransferase superfamily. RNA methyltransferase RsmG family.

It localises to the cytoplasm. The catalysed reaction is guanosine(527) in 16S rRNA + S-adenosyl-L-methionine = N(7)-methylguanosine(527) in 16S rRNA + S-adenosyl-L-homocysteine. In terms of biological role, specifically methylates the N7 position of guanine in position 527 of 16S rRNA. The sequence is that of Ribosomal RNA small subunit methyltransferase G from Psychrobacter cryohalolentis (strain ATCC BAA-1226 / DSM 17306 / VKM B-2378 / K5).